Reading from the N-terminus, the 299-residue chain is Acetyl-hydrolase (299 aa).

Positions His73–Gly75 match the Involved in the stabilization of the negatively charged intermediate by the formation of the oxyanion hole motif. Residues Ser143, Glu237, and His267 contribute to the active site.

Belongs to the 'GDXG' lipolytic enzyme family.

Its pathway is secondary metabolite biosynthesis; bialaphos biosynthesis. Its function is as follows. This protein removes the N-acetyl group from bialaphos as one of the final steps of biosynthesis of phosphinothricin tripeptide (PTT), also known as bialaphos (BA), a natural-product antibiotic and potent herbicide. In Streptomyces hygroscopicus, this protein is Acetyl-hydrolase (bah).